We begin with the raw amino-acid sequence, 359 residues long: MALNSSTEDGIKRIQDDCPRAGRHSYIFVMIPTLYSIIFVVGIFGNSLVVIVIYFYMKLKTVASVFLLNLALADLCFLLTLPLWAVYTAMEYRWPFGNHLCKIASASVSFNLYASVFLLTCLSIDRYLAIVHPMKSRLRRTMLVAKVTCIIIWLMAGLASLPAVIHRNVYFIENTNITVCAFHYESRNSTLPIGLGLTKNILGFLFPFLIILTSYTLIWKALKKAYEIQKNKPRNDDIFRIIMAIVLFFFFSWVPHQIFTFLDVLIQLGVIHDCKIADIVDTAMPITICIAYFNNCLNPLFYGFLGKKFKKYFLQLLKYIPPKAKSHSSLSTKMSTLSYRPSDNMSSAAKKPASCSEVE.

Residues 1–25 (MALNSSTEDGIKRIQDDCPRAGRHS) lie on the Extracellular side of the membrane. Asparagine 4 carries an N-linked (GlcNAc...) asparagine glycan. Positions 15 and 17 each coordinate angiotensin II. Cystine bridges form between cysteine 18-cysteine 274 and cysteine 101-cysteine 180. Residues 26-55 (YIFVMIPTLYSIIFVVGIFGNSLVVIVIYF) form a helical membrane-spanning segment. Residues 56 to 61 (YMKLKT) lie on the Cytoplasmic side of the membrane. A helical transmembrane segment spans residues 62–89 (VASVFLLNLALADLCFLLTLPLWAVYTA). Over 90–98 (MEYRWPFGN) the chain is Extracellular. The helical transmembrane segment at 99 to 125 (HLCKIASASVSFNLYASVFLLTCLSID) threads the bilayer. Topologically, residues 126-141 (RYLAIVHPMKSRLRRT) are cytoplasmic. A helical membrane pass occupies residues 142–165 (MLVAKVTCIIIWLMAGLASLPAVI). Residues 166–190 (HRNVYFIENTNITVCAFHYESRNST) are Extracellular-facing. An angiotensin II-binding site is contributed by arginine 167. N-linked (GlcNAc...) asparagine glycosylation occurs at asparagine 176. 3 residues coordinate angiotensin II: phenylalanine 182, histidine 183, and tyrosine 184. Asparagine 188 carries an N-linked (GlcNAc...) asparagine glycan. The helical transmembrane segment at 191 to 216 (LPIGLGLTKNILGFLFPFLIILTSYT) threads the bilayer. An angiotensin II-binding site is contributed by lysine 199. Over 217-239 (LIWKALKKAYEIQKNKPRNDDIF) the chain is Cytoplasmic. Residues 240 to 268 (RIIMAIVLFFFFSWVPHQIFTFLDVLIQL) traverse the membrane as a helical segment. The Extracellular segment spans residues 269 to 278 (GVIHDCKIAD). The helical transmembrane segment at 279 to 304 (IVDTAMPITICIAYFNNCLNPLFYGF) threads the bilayer. Topologically, residues 305–359 (LGKKFKKYFLQLLKYIPPKAKSHSSLSTKMSTLSYRPSDNMSSAAKKPASCSEVE) are cytoplasmic. The span at 335-347 (STLSYRPSDNMSS) shows a compositional bias: polar residues. Positions 335–359 (STLSYRPSDNMSSAAKKPASCSEVE) are disordered. Cysteine 355 carries S-palmitoyl cysteine lipidation.

This sequence belongs to the G-protein coupled receptor 1 family. As to quaternary structure, interacts with MAS1. Interacts with ARRB1. Interacts with FLNA (via filamin repeat 21); increases PKA-mediated phosphorylation of FLNA. C-terminal Ser or Thr residues may be phosphorylated.

The protein resides in the cell membrane. Its function is as follows. Receptor for angiotensin II, a vasoconstricting peptide, which acts as a key regulator of blood pressure and sodium retention by the kidney. The activated receptor in turn couples to G-alpha proteins G(q) (GNAQ, GNA11, GNA14 or GNA15) and thus activates phospholipase C and increases the cytosolic Ca(2+) concentrations, which in turn triggers cellular responses such as stimulation of protein kinase C. The polypeptide is Type-1 angiotensin II receptor A (Agtr1a) (Mus musculus (Mouse)).